Here is a 46-residue protein sequence, read N- to C-terminus: Protein PsbN (46 aa).

The chain crosses the membrane as a helical span at residues 7–27; it reads ALSVAIGVLAVLFGLTGFGVY.

It belongs to the PsbN family.

It localises to the cellular thylakoid membrane. Functionally, may play a role in photosystem I and II biogenesis. This is Protein PsbN from Synechococcus sp. (strain CC9605).